The sequence spans 448 residues: FAD-linked oxidoreductase nodO (448 aa).

The FAD-binding PCMH-type domain maps to 35–206 (PEHFPLAIVK…IRFFLKTCPL (172 aa)).

Belongs to the oxygen-dependent FAD-linked oxidoreductase family. FAD is required as a cofactor.

Its pathway is secondary metabolite biosynthesis. FAD-linked oxidoreductase; part of the gene cluster that mediates the biosynthesis of the indole diterpenes nodulisporic acids (NA). Nodulisporic acid A (NAA) and its chemically modified derivatives are of particular significance because of their highly potent insecticidal activity against blood-feeding arthropods and lack of observable adverse effects on mammals, in particular the tremogenicity associated with the paspaline-derived IDTs is not observed. The geranylgeranyl diphosphate (GGPP) synthase ggs1, localized outside of the cluster, is proposed to catalyze the first step in nodulisporic acid biosynthesis via conversion of farnesyl pyrophosphate and isopentyl pyrophosphate into geranylgeranyl pyrophosphate (GGPP). Condensation of indole-3-glycerol phosphate with GGPP by the prenyl transferase nodC then forms 3-geranylgeranylindole (3-GGI). Epoxidation by the FAD-dependent monooxygenase nodM leads to a single-epoxidized-GGI that is substrate of the terpene cyclase nodB for cyclization to yield emindole SB. The terminal methyl carbon, C28, of emindole SB is then oxidized by the cytochrome P450 monooxygenase nodW to produce nodulisporic acid F (NAF), the pentacyclic core of NAA. NAF is converted to nodulisporic acid E (NAE) via prenylation. This step is probably performed by one of the indole diterpene prenyltransferases nodD1 or nodD2. Several oxidation steps performed by the FAD-linked oxidoreductase nodO and one of the cytochrome P450 monooxygenase nodR, nodX or nodZ further convert NAE to nodulisporic acid D (NAD). NAD is substrate of cytochrome P450 monooxygenase nodJ to produce the precursor of nodulisporic acid C (NAC), converted to NAC by one of the indole diterpene prenyltransferases nodD1 or nodD2. The FAD-dependent monooxygenase nodY2 then oxidizes NAC to nodulisporic acid B (NAB). Finally NAB is converted to NAA by one of the cytochrome P450 monooxygenases nodR, nodX or nodZ. This is FAD-linked oxidoreductase nodO from Hypoxylon pulicicidum.